The sequence spans 333 residues: Ribosomal RNA small subunit methyltransferase C (333 aa).

It belongs to the methyltransferase superfamily. RsmC family. Monomer.

The protein localises to the cytoplasm. The enzyme catalyses guanosine(1207) in 16S rRNA + S-adenosyl-L-methionine = N(2)-methylguanosine(1207) in 16S rRNA + S-adenosyl-L-homocysteine + H(+). Functionally, specifically methylates the guanine in position 1207 of 16S rRNA in the 30S particle. In Mannheimia succiniciproducens (strain KCTC 0769BP / MBEL55E), this protein is Ribosomal RNA small subunit methyltransferase C.